The following is a 521-amino-acid chain: Bifunctional purine biosynthesis protein PurH (521 aa).

In terms of domain architecture, MGS-like spans 1–145 (MIKQALISVS…KNHRDVTVVV (145 aa)).

This sequence belongs to the PurH family.

It carries out the reaction (6R)-10-formyltetrahydrofolate + 5-amino-1-(5-phospho-beta-D-ribosyl)imidazole-4-carboxamide = 5-formamido-1-(5-phospho-D-ribosyl)imidazole-4-carboxamide + (6S)-5,6,7,8-tetrahydrofolate. The catalysed reaction is IMP + H2O = 5-formamido-1-(5-phospho-D-ribosyl)imidazole-4-carboxamide. It functions in the pathway purine metabolism; IMP biosynthesis via de novo pathway; 5-formamido-1-(5-phospho-D-ribosyl)imidazole-4-carboxamide from 5-amino-1-(5-phospho-D-ribosyl)imidazole-4-carboxamide (10-formyl THF route): step 1/1. It participates in purine metabolism; IMP biosynthesis via de novo pathway; IMP from 5-formamido-1-(5-phospho-D-ribosyl)imidazole-4-carboxamide: step 1/1. The polypeptide is Bifunctional purine biosynthesis protein PurH (Burkholderia ambifaria (strain ATCC BAA-244 / DSM 16087 / CCUG 44356 / LMG 19182 / AMMD) (Burkholderia cepacia (strain AMMD))).